Consider the following 279-residue polypeptide: Protease HtpX homolog (279 aa).

Transmembrane regions (helical) follow at residues 6 to 26 (TVAL…MMGG) and 28 to 48 (GGAL…YWFS). Residue His-127 participates in Zn(2+) binding. Glu-128 is a catalytic residue. His-131 contributes to the Zn(2+) binding site. 2 consecutive transmembrane segments (helical) span residues 137 to 157 (ILIG…AHMA) and 177 to 197 (LGLL…QMAI). Glu-202 serves as a coordination point for Zn(2+).

It belongs to the peptidase M48B family. Zn(2+) serves as cofactor.

The protein localises to the cell inner membrane. The polypeptide is Protease HtpX homolog (Syntrophotalea carbinolica (strain DSM 2380 / NBRC 103641 / GraBd1) (Pelobacter carbinolicus)).